Reading from the N-terminus, the 785-residue chain is MLKAVMPRPWVCSRCVKRQIQSSRGLATASTQYREPRPVPTDHSAPGAKHDDRTLRQIFDSPDFWADFSQSSKQSYYRPGVGLFQNRYLVNPQGFEVFANTSLRKAQRIVDKVLKASTVEEYRHVARDLDRLSDLLCRVIDLSDFVRATHPNAAIQAAASRAYAKMFEYMNILNTTTGLDKQLEVAMGTPEIVAGWTEEEVVVADILKKDFAKSAIDLPRAQREKFVALSQEISEIGPDFVDYMTPAKSYLTFESSKLKGMDPVLVREHTTWGQTKIPTIGGAAAAAIRTVQNEEVRREIFMATRTASRNTVHKLEELMRKRAELAKLSRYESYSQLALGDKMAKSPASVTQFLEALAKDNNKIVQGEVSELLKFKFSNPNASSPGLQPWDKDYYMSRILASVRSHSRNSDFLSAYFSLGTVMQGLSRLFTRLYGVRLAPHETMPGETWNSDVRRLDVISETDGHVAVLYCDLFSRPGKSPNPAHFTLRCSREITTAELEEASMLSQNGLFKTDEEAANDGMATSKSSGVLKQLPTIALICDFVTMSGKSSRPALLSFNEVQTLFHEMGHAIHSILGRTSLQNVSGTRCATDFAELPSVLMEHFAADPSVLSLFARHYETDQQLPYEMVAEKLALDKRFEGSDTENQIILSMLDLAYHSDLPLSPTFNSTEIYHSLQQKHGALPVDPPGTCWQGFFGHLFGYGSTYYSYLFDRVLARRIWQVVFQGGEAGGSVHRGNGEKMKEEVLKWGGGRDPWKCLAGVLDDGRVENGDEKAMAIVGSWGVKE.

The transit peptide at 1 to 27 directs the protein to the mitochondrion; that stretch reads MLKAVMPRPWVCSRCVKRQIQSSRGLA. The disordered stretch occupies residues 26 to 52; that stretch reads LATASTQYREPRPVPTDHSAPGAKHDD. His-566 provides a ligand contact to Zn(2+). Residue Glu-567 is part of the active site. The Zn(2+) site is built by His-570 and His-573.

The protein belongs to the peptidase M3 family. It depends on Zn(2+) as a cofactor.

Its subcellular location is the mitochondrion matrix. The catalysed reaction is Release of an N-terminal octapeptide as second stage of processing of some proteins imported into the mitochondrion.. In terms of biological role, cleaves proteins, imported into the mitochondrion, to their mature size. While most mitochondrial precursor proteins are processed to the mature form in one step by mitochondrial processing peptidase (MPP), the sequential cleavage by MIP of an octapeptide after initial processing by MPP is a required step for a subgroup of nuclear-encoded precursor proteins destined for the matrix or the inner membrane. This chain is Mitochondrial intermediate peptidase (oct1), found in Sclerotinia sclerotiorum (strain ATCC 18683 / 1980 / Ss-1) (White mold).